Reading from the N-terminus, the 369-residue chain is Porphobilinogen deaminase, chloroplastic (369 aa).

Residues 1 to 46 constitute a chloroplast transit peptide; sequence MEMTLYSSSSFSLPSAPSNPSLSLFTSSFRFSSFKTSPFSKCRIRA. Cys303 bears the S-(dipyrrolylmethanemethyl)cysteine mark.

This sequence belongs to the HMBS family. Dipyrromethane serves as cofactor.

It is found in the plastid. Its subcellular location is the chloroplast. The catalysed reaction is 4 porphobilinogen + H2O = hydroxymethylbilane + 4 NH4(+). Its pathway is porphyrin-containing compound metabolism; protoporphyrin-IX biosynthesis; coproporphyrinogen-III from 5-aminolevulinate: step 2/4. The protein operates within porphyrin-containing compound metabolism; chlorophyll biosynthesis. In terms of biological role, tetrapolymerization of the monopyrrole PBG into the hydroxymethylbilane pre-uroporphyrinogen in several discrete steps. The chain is Porphobilinogen deaminase, chloroplastic (HEMC) from Pisum sativum (Garden pea).